The sequence spans 213 residues: MNDTTDIKHTSQLTSGDFTEAREPFALFEAWLAEATASEPNDPDAMALATADADGLPDLRMVLMKGFDARGFVFYSHIASAKGRELAANPKAALLFHWKSLRRQVRVRGPVTPVTDAEADAYFATRPRQAQIGAWASRQSRPLESRLAFEQAIAKEAAKYAIGAVPRPPGWSGWRITPLQFEFWHDRPFRLHDRIEFRRSALDVPWTKTRLYP.

FMN-binding positions include 60–65 (RMVLMK), 75–76 (YS), lysine 82, and glutamine 104. Lysine 65 is a substrate binding site. Substrate-binding residues include tyrosine 122 and arginine 126. FMN-binding positions include 139–140 (QS) and tryptophan 184. 190–192 (RLH) lines the substrate pocket. Arginine 194 lines the FMN pocket.

Belongs to the pyridoxamine 5'-phosphate oxidase family. As to quaternary structure, homodimer. The cofactor is FMN.

It catalyses the reaction pyridoxamine 5'-phosphate + O2 + H2O = pyridoxal 5'-phosphate + H2O2 + NH4(+). The enzyme catalyses pyridoxine 5'-phosphate + O2 = pyridoxal 5'-phosphate + H2O2. It participates in cofactor metabolism; pyridoxal 5'-phosphate salvage; pyridoxal 5'-phosphate from pyridoxamine 5'-phosphate: step 1/1. The protein operates within cofactor metabolism; pyridoxal 5'-phosphate salvage; pyridoxal 5'-phosphate from pyridoxine 5'-phosphate: step 1/1. Its function is as follows. Catalyzes the oxidation of either pyridoxine 5'-phosphate (PNP) or pyridoxamine 5'-phosphate (PMP) into pyridoxal 5'-phosphate (PLP). This Nitrobacter winogradskyi (strain ATCC 25391 / DSM 10237 / CIP 104748 / NCIMB 11846 / Nb-255) protein is Pyridoxine/pyridoxamine 5'-phosphate oxidase.